We begin with the raw amino-acid sequence, 1382 residues long: Hepatocyte growth factor receptor (1382 aa).

Positions 1 to 24 (MKAPAVLAPGILVLLFTLVQKSYG) are cleaved as a signal peptide. The Extracellular segment spans residues 25 to 933 (ECREALVKSE…VIVQPDQNFT (909 aa)). In terms of domain architecture, Sema spans 27 to 516 (REALVKSEMN…TGKKITKIPL (490 aa)). N-linked (GlcNAc...) asparagine glycosylation is present at Asn45. Disulfide bonds link Cys95-Cys101, Cys98-Cys160, Cys133-Cys141, and Cys173-Cys176. The N-linked (GlcNAc...) asparagine glycan is linked to Asn106. 2 N-linked (GlcNAc...) asparagine glycosylation sites follow: Asn203 and Asn359. Intrachain disulfides connect Cys299–Cys364 and Cys386–Cys398. Asn400 and Asn406 each carry an N-linked (GlcNAc...) asparagine glycan. 4 disulfide bridges follow: Cys521-Cys539, Cys527-Cys562, Cys530-Cys546, and Cys542-Cys552. 3 IPT/TIG domains span residues 564–656 (PTIY…FSYV), 658–740 (PVIT…FSYQ), and 743–837 (PIVY…LIYV). O-linked (Man) threonine glycosylation occurs at Thr583. N-linked (GlcNAc...) asparagine glycosylation is found at Asn608 and Asn636. Thr677 and Thr762 each carry an O-linked (Man) threonine glycan. 3 N-linked (GlcNAc...) asparagine glycosylation sites follow: Asn786, Asn880, and Asn931. Residues 934–956 (GLIVGVISISIILLLLLGVFLWL) traverse the membrane as a helical segment. The Cytoplasmic portion of the chain corresponds to 957 to 1382 (KKRKQIKDLG…QDNIDGEGDT (426 aa)). Ser967 is subject to Phosphoserine. At Thr978 the chain carries Phosphothreonine. Ser991, Ser998, and Ser1001 each carry phosphoserine. Tyr1004 is subject to Phosphotyrosine. One can recognise a Protein kinase domain in the interval 1079 to 1346 (VHFNEVIGRG…RISAIFSTFI (268 aa)). Residues 1085 to 1093 (IGRGHFGCV) and Lys1111 each bind ATP. Asp1205 serves as the catalytic Proton acceptor. Residues 1213–1382 (LDEKFTVKVA…QDNIDGEGDT (170 aa)) form an interaction with RANBP9 region. Tyr1231 bears the Phosphotyrosine mark. Tyr1235 and Tyr1236 each carry phosphotyrosine; by autocatalysis. Thr1290 is subject to Phosphothreonine. The tract at residues 1321–1360 (WHPKAELRPSFSELVSRISAIFSTFIGEHYVHVNATYVNV) is interaction with MUC20. Phosphotyrosine; by autocatalysis is present on residues Tyr1350 and Tyr1357. Residue Tyr1366 is modified to Phosphotyrosine.

It belongs to the protein kinase superfamily. Tyr protein kinase family. Heterodimer made of an alpha chain (50 kDa) and a beta chain (145 kDa) which are disulfide linked. Binds PLXNB1. Interacts when phosphorylated with downstream effectors including STAT3, PIK3R1, SRC, PCLG1, GRB2 and GAB1. Interacts with SPSB1, SPSB2 and SPSB4. Interacts with INPP5D/SHIP1. When phosphorylated at Tyr-1357, interacts with INPPL1/SHIP2. Interacts with RANBP9 and RANBP10, as well as SPSB1, SPSB2, SPSB3 and SPSB4. SPSB1 binding occurs in the presence and in the absence of HGF, however HGF treatment has a positive effect on this interaction. Interacts with MUC20; prevents interaction with GRB2 and suppresses hepatocyte growth factor-induced cell proliferation. Interacts with GRB10. Interacts with PTPN1 and PTPN2. Interacts with HSP90AA1 and HSP90AB1; the interaction suppresses MET kinase activity. Interacts with tensin TNS3. Interacts (when phosphorylated) with tensin TNS4 (via SH2 domain); the interaction increases MET protein stability by inhibiting MET endocytosis and subsequent lysosomal degradation. In terms of processing, autophosphorylated in response to ligand binding on Tyr-1235 and Tyr-1236 in the kinase domain leading to further phosphorylation of Tyr-1350 and Tyr-1357 in the C-terminal multifunctional docking site. Dephosphorylated by PTPRJ at Tyr-1350 and Tyr-1366. Dephosphorylated by PTPN1 and PTPN2. Ubiquitinated. Ubiquitination by CBL regulates the receptor stability and activity through proteasomal degradation. Post-translationally, O-mannosylation of IPT/TIG domains by TMEM260 is required for protein maturation. O-mannosylated residues are composed of single mannose glycans that are not elongated or modified.

It localises to the membrane. The enzyme catalyses L-tyrosyl-[protein] + ATP = O-phospho-L-tyrosyl-[protein] + ADP + H(+). Its activity is regulated as follows. In its inactive state, the C-terminal tail interacts with the catalytic domain and inhibits the kinase activity. Upon ligand binding, the C-terminal tail is displaced and becomes phosphorylated, thus increasing the kinase activity. Receptor tyrosine kinase that transduces signals from the extracellular matrix into the cytoplasm by binding to hepatocyte growth factor/HGF ligand. Regulates many physiological processes including proliferation, scattering, morphogenesis and survival. Ligand binding at the cell surface induces autophosphorylation of MET on its intracellular domain that provides docking sites for downstream signaling molecules. Following activation by ligand, interacts with the PI3-kinase subunit PIK3R1, PLCG1, SRC, GRB2, STAT3 or the adapter GAB1. Recruitment of these downstream effectors by MET leads to the activation of several signaling cascades including the RAS-ERK, PI3 kinase-AKT, or PLCgamma-PKC. The RAS-ERK activation is associated with the morphogenetic effects while PI3K/AKT coordinates prosurvival effects. During embryonic development, MET signaling plays a role in gastrulation, development and migration of muscles and neuronal precursors, angiogenesis and kidney formation. In adults, participates in wound healing as well as organ regeneration and tissue remodeling. Also promotes differentiation and proliferation of hematopoietic cells. The chain is Hepatocyte growth factor receptor (MET) from Felis catus (Cat).